We begin with the raw amino-acid sequence, 313 residues long: Carbamate kinase 2 (313 aa).

The protein belongs to the carbamate kinase family.

The protein localises to the cytoplasm. It carries out the reaction hydrogencarbonate + NH4(+) + ATP = carbamoyl phosphate + ADP + H2O + H(+). It functions in the pathway metabolic intermediate metabolism; carbamoyl phosphate degradation; CO(2) and NH(3) from carbamoyl phosphate: step 1/1. This chain is Carbamate kinase 2 (arcC2), found in Staphylococcus aureus (strain bovine RF122 / ET3-1).